The chain runs to 154 residues: Troponin C, isoallergen Bla g 6.0301 (154 aa).

4 consecutive EF-hand domains span residues 11-46 (EQIS…MGQP), 47-82 (FNRR…FIIE), 87-122 (AMEK…LDEQ), and 123-154 (LTSD…MMTG). Residues D60, D62, S64, R66, and E71 each coordinate Ca(2+). Ca(2+)-binding residues include D136, D138, S140, T142, and E147.

The protein belongs to the troponin C family.

Functionally, troponin is the central regulatory protein of striated muscle contraction. It consists of three components: Troponin-I (Tn-I) which is the inhibitor of actomyosin ATPase, Troponin-T (Tn-T) which contains the binding site for tropomyosin and Troponin-C (Tn-C). The binding of calcium to Tn-C abolishes the inhibitory action of Tn on actin filaments. This is Troponin C, isoallergen Bla g 6.0301 from Blattella germanica (German cockroach).